The primary structure comprises 364 residues: S-adenosylmethionine:tRNA ribosyltransferase-isomerase (364 aa).

It belongs to the QueA family. In terms of assembly, monomer.

It localises to the cytoplasm. It carries out the reaction 7-aminomethyl-7-carbaguanosine(34) in tRNA + S-adenosyl-L-methionine = epoxyqueuosine(34) in tRNA + adenine + L-methionine + 2 H(+). The protein operates within tRNA modification; tRNA-queuosine biosynthesis. Its function is as follows. Transfers and isomerizes the ribose moiety from AdoMet to the 7-aminomethyl group of 7-deazaguanine (preQ1-tRNA) to give epoxyqueuosine (oQ-tRNA). In Synechococcus sp. (strain CC9902), this protein is S-adenosylmethionine:tRNA ribosyltransferase-isomerase.